The chain runs to 488 residues: Aspartyl/glutamyl-tRNA(Asn/Gln) amidotransferase subunit B (488 aa).

This sequence belongs to the GatB/GatE family. GatB subfamily. In terms of assembly, heterotrimer of A, B and C subunits.

It carries out the reaction L-glutamyl-tRNA(Gln) + L-glutamine + ATP + H2O = L-glutaminyl-tRNA(Gln) + L-glutamate + ADP + phosphate + H(+). It catalyses the reaction L-aspartyl-tRNA(Asn) + L-glutamine + ATP + H2O = L-asparaginyl-tRNA(Asn) + L-glutamate + ADP + phosphate + 2 H(+). Allows the formation of correctly charged Asn-tRNA(Asn) or Gln-tRNA(Gln) through the transamidation of misacylated Asp-tRNA(Asn) or Glu-tRNA(Gln) in organisms which lack either or both of asparaginyl-tRNA or glutaminyl-tRNA synthetases. The reaction takes place in the presence of glutamine and ATP through an activated phospho-Asp-tRNA(Asn) or phospho-Glu-tRNA(Gln). The sequence is that of Aspartyl/glutamyl-tRNA(Asn/Gln) amidotransferase subunit B from Neorickettsia sennetsu (strain ATCC VR-367 / Miyayama) (Ehrlichia sennetsu).